The sequence spans 714 residues: ATP-dependent zinc metalloprotease FtsH (714 aa).

At 1–75 (MEKPRRLRPR…KNPMEPRQQQ (75 aa)) the chain is on the cytoplasmic side. A helical membrane pass occupies residues 76-96 (FSLWYVLVTILAMLAIQTLFV). Topologically, residues 97-188 (SGHVETIPYS…FVGQPDNKWL (92 aa)) are periplasmic. A helical transmembrane segment spans residues 189–209 (STILSWVVPAVIFFGIWSFLI). Residues 210–714 (KRVGGAAGSM…GKPDQKTQGT (505 aa)) lie on the Cytoplasmic side of the membrane. Position 280-287 (280-287 (GAPGTGKT)) interacts with ATP. His-502 contacts Zn(2+). Glu-503 is an active-site residue. Zn(2+) is bound by residues His-506 and Asp-579. The disordered stretch occupies residues 688–714 (PMPPPKPVANIEESTATGKPDQKTQGT). Over residues 699-714 (EESTATGKPDQKTQGT) the composition is skewed to polar residues.

In the central section; belongs to the AAA ATPase family. It in the C-terminal section; belongs to the peptidase M41 family. As to quaternary structure, homohexamer. Zn(2+) serves as cofactor.

It localises to the cell inner membrane. Acts as a processive, ATP-dependent zinc metallopeptidase for both cytoplasmic and membrane proteins. Plays a role in the quality control of integral membrane proteins. The chain is ATP-dependent zinc metalloprotease FtsH from Ralstonia pickettii (strain 12J).